The sequence spans 875 residues: Alanine--tRNA ligase (875 aa).

Residues histidine 563, histidine 567, cysteine 665, and histidine 669 each coordinate Zn(2+).

The protein belongs to the class-II aminoacyl-tRNA synthetase family. Requires Zn(2+) as cofactor.

Its subcellular location is the cytoplasm. The enzyme catalyses tRNA(Ala) + L-alanine + ATP = L-alanyl-tRNA(Ala) + AMP + diphosphate. Its function is as follows. Catalyzes the attachment of alanine to tRNA(Ala) in a two-step reaction: alanine is first activated by ATP to form Ala-AMP and then transferred to the acceptor end of tRNA(Ala). Also edits incorrectly charged Ser-tRNA(Ala) and Gly-tRNA(Ala) via its editing domain. The sequence is that of Alanine--tRNA ligase from Desulfitobacterium hafniense (strain Y51).